Consider the following 294-residue polypeptide: tRNA dimethylallyltransferase (294 aa).

10–17 (GPTAVGKT) contacts ATP. 12 to 17 (TAVGKT) lines the substrate pocket. The interval 35–38 (DSQQ) is interaction with substrate tRNA.

The protein belongs to the IPP transferase family. As to quaternary structure, monomer. Requires Mg(2+) as cofactor.

The enzyme catalyses adenosine(37) in tRNA + dimethylallyl diphosphate = N(6)-dimethylallyladenosine(37) in tRNA + diphosphate. Functionally, catalyzes the transfer of a dimethylallyl group onto the adenine at position 37 in tRNAs that read codons beginning with uridine, leading to the formation of N6-(dimethylallyl)adenosine (i(6)A). The sequence is that of tRNA dimethylallyltransferase from Streptococcus suis (strain 98HAH33).